A 157-amino-acid chain; its full sequence is Protein PEROXIN-4 (157 aa).

Residues 3-153 (ASRARLFKEY…AQMYTRLAAM (151 aa)) enclose the UBC core domain. Catalysis depends on Cys-90, which acts as the Glycyl thioester intermediate.

Belongs to the ubiquitin-conjugating enzyme family. In terms of assembly, interacts with PEX22.

The protein resides in the peroxisome membrane. The catalysed reaction is S-ubiquitinyl-[E1 ubiquitin-activating enzyme]-L-cysteine + [E2 ubiquitin-conjugating enzyme]-L-cysteine = [E1 ubiquitin-activating enzyme]-L-cysteine + S-ubiquitinyl-[E2 ubiquitin-conjugating enzyme]-L-cysteine.. The protein operates within protein modification; protein ubiquitination. Functionally, required for peroxisome biogenesis. Necessary for the developmental elimination of obsolete peroxisome matrix proteins. May be involved in the ubiquitination of PEX5, targeting it for recycling. Accepts the ubiquitin from the E1 complex and catalyzes its covalent attachment to other proteins. This Arabidopsis thaliana (Mouse-ear cress) protein is Protein PEROXIN-4 (PEX4).